Here is a 63-residue protein sequence, read N- to C-terminus: Trypsin inhibitor 5 (63 aa).

The first 21 residues, 1–21, serve as a signal peptide directing secretion; that stretch reads MASVAESSGVVEVIELISDGG. A propeptide spanning residues 22–34 is cleaved from the precursor; sequence NDLPRKIMSGRHG. Cystine bridges form between cysteine 37-cysteine 54, cysteine 44-cysteine 56, and cysteine 50-cysteine 62.

It belongs to the protease inhibitor I7 (squash-type serine protease inhibitor) family.

Its subcellular location is the secreted. Functionally, inhibits trypsin. The protein is Trypsin inhibitor 5 of Luffa aegyptiaca (Sponge gourd).